The chain runs to 731 residues: 1,4-alpha-glucan branching enzyme GlgB (731 aa).

Asp411 functions as the Nucleophile in the catalytic mechanism. The active-site Proton donor is Glu464.

It belongs to the glycosyl hydrolase 13 family. GlgB subfamily. In terms of assembly, monomer.

It carries out the reaction Transfers a segment of a (1-&gt;4)-alpha-D-glucan chain to a primary hydroxy group in a similar glucan chain.. It participates in glycan biosynthesis; glycogen biosynthesis. In terms of biological role, catalyzes the formation of the alpha-1,6-glucosidic linkages in glycogen by scission of a 1,4-alpha-linked oligosaccharide from growing alpha-1,4-glucan chains and the subsequent attachment of the oligosaccharide to the alpha-1,6 position. This is 1,4-alpha-glucan branching enzyme GlgB from Mycobacterium tuberculosis (strain ATCC 25177 / H37Ra).